A 382-amino-acid polypeptide reads, in one-letter code: Protein MGF 360-4L (382 aa).

It belongs to the asfivirus MGF 360 family.

Its function is as follows. Plays a role in virus cell tropism, and may be required for efficient virus replication in macrophages. The protein is Protein MGF 360-4L of Ornithodoros (relapsing fever ticks).